The primary structure comprises 392 residues: Xyloside xylosyltransferase 1 (392 aa).

Residues M1–A19 lie on the Cytoplasmic side of the membrane. The chain crosses the membrane as a helical; Signal-anchor for type II membrane protein span at residues L20–G42. Topologically, residues S43–D392 are lumenal. UDP-alpha-D-xylose is bound at residue M103–T105. Mn(2+) is bound at residue D225. L226 is a UDP-alpha-D-xylose binding site. D227 serves as a coordination point for Mn(2+). The interval H262–W265 is interaction with target proteins. The UDP-alpha-D-xylose site is built by S289, L327, and Q330. Residues Q330 and W359 each coordinate a glycoprotein. Intrachain disulfides connect C349–C374 and C356–C385. H382 lines the Mn(2+) pocket. N384 is a binding site for a glycoprotein.

It belongs to the glycosyltransferase 8 family. Homodimer. Dimer formation may be essential for the retention in endoplasmic reticulum. Requires Mg(2+) as cofactor. Mn(2+) is required as a cofactor.

It is found in the endoplasmic reticulum membrane. The catalysed reaction is 3-O-[alpha-D-xylosyl-(1-&gt;3)-beta-D-glucosyl]-L-seryl-[EGF-like domain protein] + UDP-alpha-D-xylose = 3-O-[alpha-D-xylosyl-(1-&gt;3)-alpha-D-xylosyl-(1-&gt;3)-beta-D-glucosyl]-L-seryl-[EGF-like domain protein] + UDP + H(+). In terms of biological role, alpha-1,3-xylosyltransferase, which elongates the O-linked xylose-glucose disaccharide attached to EGF-like repeats in the extracellular domain of target proteins by catalyzing the addition of the second xylose. Known targets include Notch proteins and coagulation factors, such as F9. This chain is Xyloside xylosyltransferase 1 (Xxylt1), found in Mus musculus (Mouse).